Reading from the N-terminus, the 318-residue chain is Transaldolase (318 aa).

Residue Lys132 is the Schiff-base intermediate with substrate of the active site.

It belongs to the transaldolase family. Type 1 subfamily. In terms of assembly, homodimer.

It is found in the cytoplasm. The enzyme catalyses D-sedoheptulose 7-phosphate + D-glyceraldehyde 3-phosphate = D-erythrose 4-phosphate + beta-D-fructose 6-phosphate. Its pathway is carbohydrate degradation; pentose phosphate pathway; D-glyceraldehyde 3-phosphate and beta-D-fructose 6-phosphate from D-ribose 5-phosphate and D-xylulose 5-phosphate (non-oxidative stage): step 2/3. Transaldolase is important for the balance of metabolites in the pentose-phosphate pathway. The polypeptide is Transaldolase (Shewanella sediminis (strain HAW-EB3)).